The sequence spans 293 residues: Proline iminopeptidase (293 aa).

The 250-residue stretch at 28-277 (KPLVLLHGGP…YSRHMPFVEE (250 aa)) folds into the AB hydrolase-1 domain. The active-site Nucleophile is the Ser-104. Asp-244 is a catalytic residue. Catalysis depends on His-271, which acts as the Proton donor.

It belongs to the peptidase S33 family.

It carries out the reaction Release of N-terminal proline from a peptide.. Its function is as follows. Releases the N-terminal proline from various substrates. This is Proline iminopeptidase from Clostridioides difficile (strain 630) (Peptoclostridium difficile).